Consider the following 297-residue polypeptide: Phosphoribosylaminoimidazole-succinocarboxamide synthase (297 aa).

This sequence belongs to the SAICAR synthetase family.

It carries out the reaction 5-amino-1-(5-phospho-D-ribosyl)imidazole-4-carboxylate + L-aspartate + ATP = (2S)-2-[5-amino-1-(5-phospho-beta-D-ribosyl)imidazole-4-carboxamido]succinate + ADP + phosphate + 2 H(+). It functions in the pathway purine metabolism; IMP biosynthesis via de novo pathway; 5-amino-1-(5-phospho-D-ribosyl)imidazole-4-carboxamide from 5-amino-1-(5-phospho-D-ribosyl)imidazole-4-carboxylate: step 1/2. The chain is Phosphoribosylaminoimidazole-succinocarboxamide synthase from Corynebacterium diphtheriae (strain ATCC 700971 / NCTC 13129 / Biotype gravis).